A 792-amino-acid chain; its full sequence is Phenylalanine--tRNA ligase beta subunit (792 aa).

A tRNA-binding domain is found at 39 to 147 (AAAFSGVVVG…DNAPIGQDIR (109 aa)). The 76-residue stretch at 400-475 (PERPAVRLRP…RLHGYDAIPA (76 aa)) folds into the B5 domain. Mg(2+) contacts are provided by Asp453, Asp459, Glu462, and Glu463. Residues 698–791 (SRQPAVTRDV…TETSLGARLR (94 aa)) form the FDX-ACB domain.

This sequence belongs to the phenylalanyl-tRNA synthetase beta subunit family. Type 1 subfamily. As to quaternary structure, tetramer of two alpha and two beta subunits. Requires Mg(2+) as cofactor.

The protein localises to the cytoplasm. It carries out the reaction tRNA(Phe) + L-phenylalanine + ATP = L-phenylalanyl-tRNA(Phe) + AMP + diphosphate + H(+). This Aromatoleum aromaticum (strain DSM 19018 / LMG 30748 / EbN1) (Azoarcus sp. (strain EbN1)) protein is Phenylalanine--tRNA ligase beta subunit.